A 942-amino-acid chain; its full sequence is Mitogen-activated protein kinase kinase kinase A (942 aa).

The PB1 domain occupies 15 to 96; it reads FIRIKCILGD…NPTKIISTKF (82 aa). A disordered region spans residues 107 to 144; the sequence is PLSSSLSPTQSLILNNNNNNNNNNNNNNNNNNNNNNNN. The region spanning 170–429 is the Protein kinase domain; that stretch reads WQKGQILGRG…ANQLLKHPFI (260 aa). ATP is bound by residues 176–184 and Lys-199; that span reads LGRGGYGSV. Residue Asp-297 is the Proton acceptor of the active site. Low complexity predominate over residues 441–486; sequence ISPTTTLSTNTTNTTATTTTTNNATNSNINQQQQQQQQQPPTRTQR. The tract at residues 441 to 512 is disordered; the sequence is ISPTTTLSTN…ISTSTSSSSS (72 aa). Positions 487–498 are enriched in polar residues; that stretch reads VSISAGSSNNKR. A compositionally biased stretch (low complexity) spans 500-512; it reads TPPISTSTSSSSS. The chain crosses the membrane as a helical span at residues 513 to 533; it reads SILNNFSINIILPINLIILIF. The region spanning 518–564 is the F-box domain; that stretch reads FSINIILPINLIILIFREIKPNFVNTLSRVCKHWKQIIDDDELWNKY. 7 WD repeats span residues 607–646, 690–733, 736–778, 780–825, 828–865, 872–909, and 912–942; these read GHDK…HHNH, GHSG…TLFT, NHQE…STLR, HTGG…KVRS, QHTE…TIST, RQKN…DSRS, and GHHE…WSID.

Belongs to the protein kinase superfamily. STE Ser/Thr protein kinase family. MAP kinase kinase kinase subfamily. As to quaternary structure, interacts with ubcB and ubpB. It depends on Mg(2+) as a cofactor. Post-translationally, ubcB and ubpB differentially control ubiquitination/deubiquitination and degradation in a cell-type-specific and temporally regulated manner.

It localises to the membrane. It carries out the reaction L-seryl-[protein] + ATP = O-phospho-L-seryl-[protein] + ADP + H(+). The catalysed reaction is L-threonyl-[protein] + ATP = O-phospho-L-threonyl-[protein] + ADP + H(+). In terms of biological role, regulates cell-type differentiation and spatial patterning, required for the proper induction and maintenance of prespore cell differentiation. The chain is Mitogen-activated protein kinase kinase kinase A from Dictyostelium discoideum (Social amoeba).